Reading from the N-terminus, the 417-residue chain is Tyrosine--tRNA ligase (417 aa).

Y34 lines the L-tyrosine pocket. The 'HIGH' region motif lies at 39–48 (PTGDSMHIGH). L-tyrosine is bound by residues Y165 and Q169. The 'KMSKS' region motif lies at 227–231 (KFGKS). ATP is bound at residue K230. The region spanning 349-417 (ENIVLWLVDT…KKKYFLARVK (69 aa)) is the S4 RNA-binding domain.

The protein belongs to the class-I aminoacyl-tRNA synthetase family. TyrS type 1 subfamily. Homodimer.

The protein resides in the cytoplasm. It catalyses the reaction tRNA(Tyr) + L-tyrosine + ATP = L-tyrosyl-tRNA(Tyr) + AMP + diphosphate + H(+). In terms of biological role, catalyzes the attachment of tyrosine to tRNA(Tyr) in a two-step reaction: tyrosine is first activated by ATP to form Tyr-AMP and then transferred to the acceptor end of tRNA(Tyr). The chain is Tyrosine--tRNA ligase from Pediococcus pentosaceus (strain ATCC 25745 / CCUG 21536 / LMG 10740 / 183-1w).